We begin with the raw amino-acid sequence, 548 residues long: MFS-rype transporter paaT (548 aa).

Residues 1 to 10 (MEAPRSDQAH) are compositionally biased toward basic and acidic residues. The disordered stretch occupies residues 1 to 32 (MEAPRSDQAHTDATTPMEAIRTTSLGTNNYGP). The span at 21-30 (RTTSLGTNNY) shows a compositional bias: polar residues. N-linked (GlcNAc...) asparagine glycosylation is found at Asn70 and Asn93. 12 helical membrane passes run 100-120 (WYCTMVVAFTCFVVAFCSSVI), 139-159 (LVVITVFVIGFGLGPMVFAPM), 174-194 (ALAVIFVIPCAVSKNIGTLIV), 197-217 (LIDGIAFSAPMTLVGGTLADL), 224-244 (GVPMAAFSAAPFIGPAIGPLV), 256-276 (WLYWIQLILAFVAWVMITFTV), 332-352 (IVLFISLYMSVIYGLLYMFFV), 370-390 (GLMFIPLAIGVIFSACCAPFV), 411-431 (LIPMMWACWCIPSGLFVFAWT), 436-456 (LHWMGPAMGGFLIGVGVILLY), 471-493 (AASALAAKTFIRSIWGACTVLFT), and 505-525 (ASTLLAFIGLACCAIPYVFYF). Positions 258-269 (YWIQLILAFVAW) match the Peroxisomal targeting signal motif.

Belongs to the major facilitator superfamily. DHA1 family. Polyamines/proton antiporter (TC 2.A.1.2.16) subfamily.

It localises to the peroxisome membrane. In terms of biological role, MFS-type transporter involved in penicillin production, most likely through the translocation of side-chain precursors (phenylacetic acid and phenoxyacetic acid) from the cytosol to the peroxisomal lumen across the peroxisomal membrane. This chain is MFS-rype transporter paaT, found in Penicillium rubens (strain ATCC 28089 / DSM 1075 / NRRL 1951 / Wisconsin 54-1255) (Penicillium chrysogenum).